Reading from the N-terminus, the 51-residue chain is Large ribosomal subunit protein eL39 (51 aa).

Belongs to the eukaryotic ribosomal protein eL39 family. In terms of assembly, part of the 50S ribosomal subunit.

The sequence is that of Large ribosomal subunit protein eL39 from Thermococcus kodakarensis (strain ATCC BAA-918 / JCM 12380 / KOD1) (Pyrococcus kodakaraensis (strain KOD1)).